Reading from the N-terminus, the 321-residue chain is Methionyl-tRNA formyltransferase (321 aa).

112 to 115 provides a ligand contact to (6S)-5,6,7,8-tetrahydrofolate; it reads SILP.

Belongs to the Fmt family.

It catalyses the reaction L-methionyl-tRNA(fMet) + (6R)-10-formyltetrahydrofolate = N-formyl-L-methionyl-tRNA(fMet) + (6S)-5,6,7,8-tetrahydrofolate + H(+). Attaches a formyl group to the free amino group of methionyl-tRNA(fMet). The formyl group appears to play a dual role in the initiator identity of N-formylmethionyl-tRNA by promoting its recognition by IF2 and preventing the misappropriation of this tRNA by the elongation apparatus. The polypeptide is Methionyl-tRNA formyltransferase (Shewanella pealeana (strain ATCC 700345 / ANG-SQ1)).